Here is a 101-residue protein sequence, read N- to C-terminus: Small ribosomal subunit protein uS14 (101 aa).

The protein belongs to the universal ribosomal protein uS14 family. In terms of assembly, part of the 30S ribosomal subunit. Contacts proteins S3 and S10.

Binds 16S rRNA, required for the assembly of 30S particles and may also be responsible for determining the conformation of the 16S rRNA at the A site. The protein is Small ribosomal subunit protein uS14 of Histophilus somni (strain 2336) (Haemophilus somnus).